Here is a 339-residue protein sequence, read N- to C-terminus: Undecaprenyl-phosphate 4-deoxy-4-formamido-L-arabinose transferase (339 aa).

Transmembrane regions (helical) follow at residues 235–255 and 269–289; these read LSLVGGGMALAGFLFALFLLV and LFVLFAVLFMFSGVQLLGMGL.

The protein belongs to the glycosyltransferase 2 family.

Its subcellular location is the cell inner membrane. It carries out the reaction UDP-4-deoxy-4-formamido-beta-L-arabinose + di-trans,octa-cis-undecaprenyl phosphate = 4-deoxy-4-formamido-alpha-L-arabinopyranosyl di-trans,octa-cis-undecaprenyl phosphate + UDP. Its pathway is glycolipid biosynthesis; 4-amino-4-deoxy-alpha-L-arabinose undecaprenyl phosphate biosynthesis; 4-amino-4-deoxy-alpha-L-arabinose undecaprenyl phosphate from UDP-4-deoxy-4-formamido-beta-L-arabinose and undecaprenyl phosphate: step 1/2. The protein operates within bacterial outer membrane biogenesis; lipopolysaccharide biosynthesis. Catalyzes the transfer of 4-deoxy-4-formamido-L-arabinose from UDP to undecaprenyl phosphate. The modified arabinose is attached to lipid A and is required for resistance to polymyxin and cationic antimicrobial peptides. The protein is Undecaprenyl-phosphate 4-deoxy-4-formamido-L-arabinose transferase of Pseudomonas aeruginosa (strain UCBPP-PA14).